Consider the following 670-residue polypeptide: Solute carrier organic anion transporter family member 1A5 (670 aa).

Over 1-20 (MGETEKRVATHEVRCFSKIK) the chain is Cytoplasmic. The helical transmembrane segment at 21–40 (MFLLALTWAYVSKSLSGIYM) threads the bilayer. Topologically, residues 41–59 (NTMLTQIERQFDIPTSIVG) are extracellular. The helical transmembrane segment at 60-80 (FINGSFEIGNLLLIIFVSYFG) threads the bilayer. The Cytoplasmic portion of the chain corresponds to 81–86 (TKLHRP). A helical transmembrane segment spans residues 87–111 (IMIGVGCVIMGLGCFLMSLPHFLMG). The Extracellular segment spans residues 112–155 (RYEYETTISPTSNLSSNSFLCMENRSQTLKPTQDPAECIKEMKS). N-linked (GlcNAc...) asparagine glycosylation is found at Asn-124 and Asn-135. A helical membrane pass occupies residues 156–184 (LMWIYVLVGNIIRGIGETPIMPLGISYIE). At 185-203 (DFAKSENSPLYIGILETGK) the chain is on the cytoplasmic side. Residues 204-224 (VFGPIVGLLLGSFCASIYVDT) form a helical membrane-spanning segment. Over 225–242 (GSVNTDDLTITPTDTRWV) the chain is Extracellular. Residues 243-267 (GAWWIGFLICAGVNILSSIPFFFFP) form a helical membrane-spanning segment. Over 268–311 (KTLPKEGLQDDVDGTNNDKEEKHREKAKEENRGITKDFLPFMKS) the chain is Cytoplasmic. The chain crosses the membrane as a helical span at residues 312–333 (LSCNPIYMLLILTSVLQINAFI). At 334–353 (NMFTFLPKYLEQQYGKSTAE) the chain is on the extracellular side. Residues 354–377 (VVLLIGVYNLPPICIGYLLIGFIM) form a helical membrane-spanning segment. The Cytoplasmic segment spans residues 378 to 381 (KKFK). The chain crosses the membrane as a helical span at residues 382 to 405 (ITVKKAAYMAFCLSLFEYLLYFLH). The Extracellular portion of the chain corresponds to 406 to 513 (FMITCDNFPV…PECANKLQYF (108 aa)). Residues 433-488 (NKVLADCNRGCSCSTNSWDPVCGDNGLAYMSACLAGCKKSVGTGTNMVFQNCSCIR) form the Kazal-like domain. 3 disulfides stabilise this stretch: Cys-439–Cys-469, Cys-445–Cys-465, and Cys-454–Cys-486. 2 N-linked (GlcNAc...) asparagine glycosylation sites follow: Asn-483 and Asn-492. Residues 514–536 (LIMSVIGSFIYSITAIPGYMVLL) form a helical membrane-spanning segment. The Cytoplasmic portion of the chain corresponds to 537-545 (RCIKPEEKS). The helical transmembrane segment at 546 to 571 (LGIGLHAFCTRVFAGIPAPIYFGALI) threads the bilayer. The Extracellular segment spans residues 572 to 605 (DRTCLHWGTLKCGEPGACRMYNINNFRRIYLVLP). Residues 606–623 (AALRGSSYLPALFILILM) form a helical membrane-spanning segment. Over 624–670 (RKFQFPGEIDSSETELAEMKITVKKSECTDVHGSPQVENDGELKTRL) the chain is Cytoplasmic.

This sequence belongs to the organo anion transporter (TC 2.A.60) family. In terms of tissue distribution, highly expressed in the kidney, moderately abundant in the retina, and even lower in the liver. Expressed (at protein level) in the small intestine. Expressed at lower levels in brain,lung, and retina.

Its subcellular location is the cell membrane. It localises to the basal cell membrane. It catalyses the reaction taurocholate(out) = taurocholate(in). The enzyme catalyses glycocholate(out) = glycocholate(in). The catalysed reaction is taurochenodeoxycholate(out) = taurochenodeoxycholate(in). It carries out the reaction tauroursodeoxycholate(out) = tauroursodeoxycholate(in). It catalyses the reaction 3,3',5'-triiodo-L-thyronine(out) = 3,3',5'-triiodo-L-thyronine(in). The enzyme catalyses L-thyroxine(out) = L-thyroxine(in). The catalysed reaction is taurodeoxycholate(out) = taurodeoxycholate(in). It carries out the reaction glycodeoxycholate(out) = glycodeoxycholate(in). It catalyses the reaction glycochenodeoxycholate(out) = glycochenodeoxycholate(in). The enzyme catalyses glycoursodeoxycholate(out) = glycoursodeoxycholate(in). The catalysed reaction is estrone 3-sulfate(out) = estrone 3-sulfate(in). It carries out the reaction prostaglandin E2(out) = prostaglandin E2(in). It catalyses the reaction substance P(out) = substance P(in). Na(+)-independent transporter that mediates the cellular uptake of a broad range of organic anions such as the endogenous bile salts cholate and deoxycholate, either in their unconjugated or conjugated forms (taurocholate and glycocholate), estrone 3-sulfate and prostaglandin E2, at the plasma membrane. Responsible for intestinal absorption of bile acids. Capable of thyroid hormone transport (both T3 or 3,3',5'-triiodo-L-thyronine, and T4 or L-tyroxine). Plays roles in blood-brain and -cerebrospinal fluid barrier transport of organic anions and signal mediators, and in hormone uptake by neural cells. May also play a role in the reuptake of neuropeptides such as substance P/TAC1 and vasoactive intestinal peptide/VIP released from retinal neurons. Shows a pH-sensitive substrate specificity which may be ascribed to the protonation state of the binding site and leads to a stimulation of substrate transport in an acidic microenvironment. Hydrogencarbonate/HCO3(-) acts as the probable counteranion that exchanges for organic anions. May contribute to regulate the transport of organic compounds in testis across the blood-testis-barrier. This Rattus norvegicus (Rat) protein is Solute carrier organic anion transporter family member 1A5 (Slco1a5).